The following is a 406-amino-acid chain: Phosphatidylinositol 5-phosphate 4-kinase type-2 alpha (406 aa).

A2 carries the N-acetylalanine modification. T3 carries the post-translational modification Phosphothreonine. S14 is modified (phosphoserine). The region spanning 33–405 (ASDPLLSVLM…RFLDFIGHIL (373 aa)) is the PIPK domain. The interval 59 to 65 (VMLMPDD) is required for interaction with PIP5K1A. N6-acetyllysine occurs at positions 89 and 145. The tract at residues 288–329 (QEEVECEENDGEEEGESDGTHPVGTPPDSPGNTLNSSPPLAP) is disordered. Residues 289–304 (EEVECEENDGEEEGES) are compositionally biased toward acidic residues.

In terms of assembly, homodimer. Interacts with PIP4K2B; the interaction may regulate localization to the nucleus. Probably interacts with PIP5K1A; the interaction inhibits PIP5K1A kinase activity. Phosphorylated in tyrosines. Phosphorylation is induced by light and increases kinase activity.

It is found in the cell membrane. Its subcellular location is the nucleus. The protein localises to the lysosome. The protein resides in the cytoplasm. It localises to the photoreceptor inner segment. It is found in the cell projection. Its subcellular location is the cilium. The protein localises to the photoreceptor outer segment. The enzyme catalyses a 1,2-diacyl-sn-glycero-3-phospho-(1D-myo-inositol-5-phosphate) + ATP = a 1,2-diacyl-sn-glycero-3-phospho-(1D-myo-inositol-4,5-bisphosphate) + ADP + H(+). The catalysed reaction is 1,2-dihexadecanoyl-sn-glycero-3-phospho-(1D-myo-inositol-5-phosphate) + ATP = 1,2-dihexadecanoyl-sn-glycero-3-phospho-(1D-myo-inositol-4,5-bisphosphate) + ADP + H(+). It catalyses the reaction 1,2-dihexadecanoyl-sn-glycero-3-phospho-(1D-myo-inositol-5-phosphate) + GTP = 1,2-dihexadecanoyl-sn-glycero-3-phospho-(1D-myo-inositol-4,5-bisphosphate) + GDP + H(+). Its activity is regulated as follows. In rod outer segments, activated by light. Catalyzes the phosphorylation of phosphatidylinositol 5-phosphate (PtdIns5P) on the fourth hydroxyl of the myo-inositol ring, to form phosphatidylinositol 4,5-bisphosphate (PtdIns(4,5)P2). Has both ATP- and GTP-dependent kinase activities. May exert its function by regulating the levels of PtdIns5P, which functions in the cytosol by increasing AKT activity and in the nucleus signals through ING2. May regulate the pool of cytosolic PtdIns5P in response to the activation of tyrosine phosphorylation. May be involved in thrombopoiesis, and the terminal maturation of megakaryocytes and regulation of their size. May negatively regulate insulin-stimulated glucose uptake by lowering the levels of PtdIns5P. This chain is Phosphatidylinositol 5-phosphate 4-kinase type-2 alpha (PIP4K2A), found in Sus scrofa (Pig).